The sequence spans 380 residues: MKEKEKIIVAMSGGVDSAVAAGLLMEAGYDVIGVNLRTWEYEAPACDTTKKSCCSPEDIRDARDVGLSLNIPFYVIKMEKVFGERVIDRFISDYKDGRTPNPCVECNTFVKFGALFEQAKKLGIDKIATGHYARVIEVDGRYAIRNAVDMKKNQTYYLYGLSQDNIKNTVFPLGEMDKSEVREIAKRMGLPVAEKPESQEICFIPENDYRSFLKKKGMEFTPGFFKLASGQIIGKHQGKEGFTIGQRKGLGIAWKNPLYVLSIEDDGTVVLGEEEETVSESFVLEEITYQALAPLALGQSMEMKVQIRYRSAPVHCKVTSLGETWKVNFLEDVKSVTPGQSATFYPTNGDYLFAGGIIQKGSITRKIKSNVEVQRESVPI.

ATP-binding positions include 10–17 (AMSGGVDS) and Leu36. Cys106 (nucleophile) is an active-site residue. Cys106 and Cys202 are disulfide-bonded. Gly130 is an ATP binding site. Positions 152–154 (KNQ) are interaction with tRNA. The active-site Cysteine persulfide intermediate is the Cys202. The interval 308–309 (RY) is interaction with tRNA.

This sequence belongs to the MnmA/TRMU family.

Its subcellular location is the cytoplasm. The catalysed reaction is S-sulfanyl-L-cysteinyl-[protein] + uridine(34) in tRNA + AH2 + ATP = 2-thiouridine(34) in tRNA + L-cysteinyl-[protein] + A + AMP + diphosphate + H(+). In terms of biological role, catalyzes the 2-thiolation of uridine at the wobble position (U34) of tRNA, leading to the formation of s(2)U34. This chain is tRNA-specific 2-thiouridylase MnmA, found in Leptospira biflexa serovar Patoc (strain Patoc 1 / Ames).